A 230-amino-acid chain; its full sequence is Cytidylate kinase (230 aa).

An ATP-binding site is contributed by 12–20 (GPSGAGKGT).

It belongs to the cytidylate kinase family. Type 1 subfamily.

The protein resides in the cytoplasm. It carries out the reaction CMP + ATP = CDP + ADP. The catalysed reaction is dCMP + ATP = dCDP + ADP. This Shewanella oneidensis (strain ATCC 700550 / JCM 31522 / CIP 106686 / LMG 19005 / NCIMB 14063 / MR-1) protein is Cytidylate kinase.